Consider the following 392-residue polypeptide: Fasciculation and elongation protein zeta-1 (392 aa).

The tract at residues 1 to 36 (MEAPLVSLDEEFEDIRPSCTEEPEEKPQCLYGTSPH) is disordered. Ser-58 is modified (phosphoserine). Positions 175 to 196 (MQNSPDPEEEEEVLEEEDGGEI) are disordered. The segment covering 180 to 194 (DPEEEEEVLEEEDGG) has biased composition (acidic residues). Residues 230 to 298 (SELTELLDRV…KKRRKEKGLS (69 aa)) adopt a coiled-coil conformation. Phosphoserine is present on residues Ser-298 and Ser-316.

This sequence belongs to the zygin family. In terms of assembly, homodimer. Interacts with the NH2-terminal variable region (V1) of PKC zeta and weakly with that of PKC epsilon. Interacts with UBE4B and SAP30L. Interacts with SCOC and ULK1; SCOC interferes with ULK1-binding to FEZ1. Directly interacts with SCOC and UVRAG. Stabilizes the interaction between SCOC and UVRAG during amino acid starvation. Phosphorylated by protein kinase C zeta; which enhances interaction with UBE4B and polyubiquitination. Post-translationally, polyubiquitinated in a UBE4B-dependent manner; which does not lead to proteasomal degradation and may be important for neurogenic activity. Polyubiquitin linkage seems to be mainly through Lys-26.

It is found in the cytoplasm. The protein localises to the cytoskeleton. It localises to the microtubule organizing center. Its subcellular location is the centrosome. The protein resides in the cell membrane. May be involved in axonal outgrowth as component of the network of molecules that regulate cellular morphology and axon guidance machinery. May participate in the transport of mitochondria and other cargos along microtubules. The sequence is that of Fasciculation and elongation protein zeta-1 (Fez1) from Mus musculus (Mouse).